The chain runs to 357 residues: 3-isopropylmalate dehydrogenase, chloroplastic (357 aa).

The transit peptide at 1–29 (MALQIAKRLLRCRADSVASSVRFFDRTFT) directs the protein to the chloroplast. Arg120, Arg130, Arg151, and Asp238 together coordinate substrate. Positions 238, 262, and 266 each coordinate Mg(2+). Residue 296 to 308 (GSAPDIAGKNLAN) participates in NAD(+) binding.

The protein belongs to the isocitrate and isopropylmalate dehydrogenases family. As to quaternary structure, homodimer. It depends on Mg(2+) as a cofactor. Mn(2+) serves as cofactor.

The protein resides in the plastid. It localises to the chloroplast. It catalyses the reaction (2R,3S)-3-isopropylmalate + NAD(+) = 4-methyl-2-oxopentanoate + CO2 + NADH. The protein operates within amino-acid biosynthesis; L-leucine biosynthesis; L-leucine from 3-methyl-2-oxobutanoate: step 3/4. Functionally, catalyzes the oxidation of 3-carboxy-2-hydroxy-4-methylpentanoate (3-isopropylmalate) to 3-carboxy-4-methyl-2-oxopentanoate. The product decarboxylates to 4-methyl-2 oxopentanoate. The polypeptide is 3-isopropylmalate dehydrogenase, chloroplastic (Solanum tuberosum (Potato)).